The chain runs to 367 residues: N-acetylmuramoyl-L-alanine amidase BlyA (367 aa).

The 135-residue stretch at 24–158 (VKKCVLHYTA…DITHKNCPAP (135 aa)) folds into the N-acetylmuramoyl-L-alanine amidase domain. The disordered stretch occupies residues 178-204 (SGKSVSKASPTKPTTSSPSSSSAVSGS). The span at 180-204 (KSVSKASPTKPTTSSPSSSSAVSGS) shows a compositional bias: low complexity. SH3b domains follow at residues 202-271 (SGSL…YVDV) and 298-367 (GKIK…GSTI).

This sequence belongs to the N-acetylmuramoyl-L-alanine amidase 2 family.

Its subcellular location is the secreted. The catalysed reaction is Hydrolyzes the link between N-acetylmuramoyl residues and L-amino acid residues in certain cell-wall glycopeptides.. Functionally, autolysins are involved in some important biological processes such as cell separation, cell-wall turnover, competence for genetic transformation, formation of the flagella and sporulation. Involved in prophage SP-beta-mediated cell lysis. The polypeptide is N-acetylmuramoyl-L-alanine amidase BlyA (blyA) (Bacillus subtilis (strain 168)).